A 480-amino-acid polypeptide reads, in one-letter code: Adenosylhomocysteinase (480 aa).

Substrate-binding residues include threonine 63, aspartate 142, and glutamate 203. 204-206 (TTT) lines the NAD(+) pocket. Residues lysine 233 and aspartate 237 each contribute to the substrate site. Residues asparagine 238, 267 to 272 (GYGDVG), glutamate 290, asparagine 325, 346 to 348 (IGH), and asparagine 394 each bind NAD(+).

This sequence belongs to the adenosylhomocysteinase family. Requires NAD(+) as cofactor.

The protein resides in the cytoplasm. It carries out the reaction S-adenosyl-L-homocysteine + H2O = L-homocysteine + adenosine. It functions in the pathway amino-acid biosynthesis; L-homocysteine biosynthesis; L-homocysteine from S-adenosyl-L-homocysteine: step 1/1. May play a key role in the regulation of the intracellular concentration of adenosylhomocysteine. The protein is Adenosylhomocysteinase of Xanthomonas axonopodis pv. citri (strain 306).